Reading from the N-terminus, the 234-residue chain is 2,3-bisphosphoglycerate-dependent phosphoglycerate mutase 1 (234 aa).

Residues 14 to 21 (RHGQSIWN), 27 to 28 (TG), Arg66, and 93 to 96 (ERHY) contribute to the substrate site. His15 acts as the Tele-phosphohistidine intermediate in catalysis. The Proton donor/acceptor role is filled by Glu93.

Belongs to the phosphoglycerate mutase family. BPG-dependent PGAM subfamily. As to quaternary structure, homodimer.

The enzyme catalyses (2R)-2-phosphoglycerate = (2R)-3-phosphoglycerate. It participates in carbohydrate degradation; glycolysis; pyruvate from D-glyceraldehyde 3-phosphate: step 3/5. Functionally, catalyzes the interconversion of 2-phosphoglycerate and 3-phosphoglycerate. The chain is 2,3-bisphosphoglycerate-dependent phosphoglycerate mutase 1 from Nitrosomonas europaea (strain ATCC 19718 / CIP 103999 / KCTC 2705 / NBRC 14298).